A 127-amino-acid polypeptide reads, in one-letter code: Probable soluble cytochrome b562 1 (127 aa).

The first 21 residues, 1–21 (MRKIPIIAGVFSLLITSCTFA), serve as a signal peptide directing secretion. Heme b contacts are provided by methionine 28 and histidine 123.

It belongs to the cytochrome b562 family. Heme b serves as cofactor.

It localises to the periplasm. Functionally, electron-transport protein of unknown function. This is Probable soluble cytochrome b562 1 (cybC1) from Yersinia pestis.